Here is a 239-residue protein sequence, read N- to C-terminus: tRNA (guanine-N(7)-)-methyltransferase (239 aa).

The S-adenosyl-L-methionine site is built by glutamate 69, glutamate 94, aspartate 121, and aspartate 144. The active site involves aspartate 144. Lysine 148 serves as a coordination point for substrate. The tract at residues 150-155 (RHNKRR) is interaction with RNA. Substrate-binding positions include aspartate 180 and 217–220 (TKFE).

It belongs to the class I-like SAM-binding methyltransferase superfamily. TrmB family. As to quaternary structure, monomer.

It catalyses the reaction guanosine(46) in tRNA + S-adenosyl-L-methionine = N(7)-methylguanosine(46) in tRNA + S-adenosyl-L-homocysteine. It functions in the pathway tRNA modification; N(7)-methylguanine-tRNA biosynthesis. Functionally, catalyzes the formation of N(7)-methylguanine at position 46 (m7G46) in tRNA. In Salmonella typhimurium (strain LT2 / SGSC1412 / ATCC 700720), this protein is tRNA (guanine-N(7)-)-methyltransferase.